The following is a 294-amino-acid chain: Syntaxin-19 (294 aa).

The region spanning 209–271 (LSEIEQRHKE…NNTKEKFGLA (63 aa)) is the t-SNARE coiled-coil homology domain.

This sequence belongs to the syntaxin family. In terms of assembly, interacts with EGFR.

Its subcellular location is the cell membrane. It localises to the cytoplasm. Its function is as follows. Plays a role in endosomal trafficking of the epidermal growth factor receptor (EGFR). In Homo sapiens (Human), this protein is Syntaxin-19 (STX19).